A 996-amino-acid polypeptide reads, in one-letter code: Cilia- and flagella-associated protein 251 (996 aa).

11 WD repeats span residues 73–114, 118–164, 168–211, 219–258, 282–319, 399–438, 445–485, 494–533, 547–593, 615–658, and 719–759; these read GHCN…PKKT, PHPN…EPCL, EFDR…KGFN, PSLK…EKVD, KGSN…IAWF, SIVS…SVLS, TDKE…WQNS, QGKP…FDVN, IHHS…YSKQ, EQET…FKFC, and AHPD…LEQI. The segment at 971 to 996 is disordered; that stretch reads DLEGEERDDNIEDQYEDEENEEYDQD.

It is found in the cell projection. It localises to the cilium. Functionally, as component of a spoke-associated complex, regulates ciliary mobility by mediating a stable and functional assembly of the radial spoke 3 (RS3). This Tetrahymena thermophila (strain SB210) protein is Cilia- and flagella-associated protein 251.